The primary structure comprises 357 residues: Transactivator protein DR7 (357 aa).

The interaction with host p53 stretch occupies residues 107–187 (LVGKDGAVYV…LLTVGGLCQT (81 aa)).

This sequence belongs to the herpesviridae US22 family. In terms of assembly, interacts with host p53 and inhibits p53-activated transcription.

Its function is as follows. Involved in transactivation. Displays transforming activity. This chain is Transactivator protein DR7 (DR7L), found in Homo sapiens (Human).